A 363-amino-acid chain; its full sequence is Fructose-bisphosphate aldolase, muscle type (363 aa).

Positions 56 and 147 each coordinate substrate. The Schiff-base intermediate with dihydroxyacetone-P role is filled by Lys230.

The protein belongs to the class I fructose-bisphosphate aldolase family. Homotetramer. In terms of tissue distribution, expressed mainly in the skeletal muscle, heart muscle, brain, and some other tissues, but probably not in liver.

The enzyme catalyses beta-D-fructose 1,6-bisphosphate = D-glyceraldehyde 3-phosphate + dihydroxyacetone phosphate. It participates in carbohydrate degradation; glycolysis; D-glyceraldehyde 3-phosphate and glycerone phosphate from D-glucose: step 4/4. The chain is Fructose-bisphosphate aldolase, muscle type from Lethenteron camtschaticum (Japanese lamprey).